Reading from the N-terminus, the 263-residue chain is Proline rich transmembrane protein 1B (263 aa).

The span at 1–17 shows a compositional bias: gly residues; it reads MEAGAGGAGSDTKGGGS. The interval 1 to 107 is disordered; the sequence is MEAGAGGAGS…IGFVGEPPPY (107 aa). 2 stretches are compositionally biased toward low complexity: residues 37-47 and 75-86; these read QMPAQPALPQL and DAPAQAAGEAGP. The next 2 membrane-spanning stretches (helical) occupy residues 190 to 210 and 238 to 258; these read MMES…IAIV and VLFS…YVVV.

This sequence belongs to the CD225/Dispanin family.

Its subcellular location is the membrane. This is Proline rich transmembrane protein 1B from Homo sapiens (Human).